We begin with the raw amino-acid sequence, 376 residues long: NAD-capped RNA hydrolase (376 aa).

The Zn(2+) site is built by C182, C185, C200, and C211. Residues Y222, 258-260 (AGF), E274, E278, and E321 contribute to the substrate site. The Nudix hydrolase domain occupies 223-351 (PRTDPCVIMV…KDGPAPILFP (129 aa)). The Mg(2+) site is built by A258, E274, E278, and E321. The short motif at 259-280 (GFLEPGESLEEAVVRETYEESG) is the Nudix box element. The Microbody targeting signal motif lies at 374 to 376 (VKM).

Belongs to the Nudix hydrolase family. NudC subfamily. In terms of assembly, homodimer. The cofactor is Mg(2+). Requires Zn(2+) as cofactor.

It catalyses the reaction a 5'-end NAD(+)-phospho-ribonucleoside in mRNA + H2O = a 5'-end phospho-adenosine-phospho-ribonucleoside in mRNA + beta-nicotinamide D-ribonucleotide + 2 H(+). The catalysed reaction is NAD(+) + H2O = beta-nicotinamide D-ribonucleotide + AMP + 2 H(+). The enzyme catalyses NADH + H2O = reduced beta-nicotinamide D-ribonucleotide + AMP + 2 H(+). Functionally, mRNA decapping enzyme that specifically removes the nicotinamide adenine dinucleotide (NAD) cap from a subset of mRNAs by hydrolyzing the diphosphate linkage to produce nicotinamide mononucleotide (NMN) and 5' monophosphate mRNA. The NAD-cap is present at the 5'-end of some RNAs; in contrast to the canonical N7 methylguanosine (m7G) cap, the NAD cap promotes mRNA decay. Mediates the hydrolysis of some nucleoside diphosphate derivatives. The chain is NAD-capped RNA hydrolase from Schizosaccharomyces pombe (strain 972 / ATCC 24843) (Fission yeast).